The primary structure comprises 472 residues: Glutamate--tRNA ligase (472 aa).

The 'HIGH' region signature appears at 8-18; the sequence is PSPTGFLHIGS. Positions 239 to 243 match the 'KMSKS' region motif; the sequence is KLSKR. Lysine 242 contributes to the ATP binding site.

This sequence belongs to the class-I aminoacyl-tRNA synthetase family. Glutamate--tRNA ligase type 1 subfamily. In terms of assembly, monomer.

The protein resides in the cytoplasm. The enzyme catalyses tRNA(Glu) + L-glutamate + ATP = L-glutamyl-tRNA(Glu) + AMP + diphosphate. In terms of biological role, catalyzes the attachment of glutamate to tRNA(Glu) in a two-step reaction: glutamate is first activated by ATP to form Glu-AMP and then transferred to the acceptor end of tRNA(Glu). In Solibacter usitatus (strain Ellin6076), this protein is Glutamate--tRNA ligase.